The following is a 120-amino-acid chain: Large ribosomal subunit protein bL12 (120 aa).

It belongs to the bacterial ribosomal protein bL12 family. As to quaternary structure, homodimer. Part of the ribosomal stalk of the 50S ribosomal subunit. Forms a multimeric L10(L12)X complex, where L10 forms an elongated spine to which 2 to 4 L12 dimers bind in a sequential fashion. Binds GTP-bound translation factors.

Forms part of the ribosomal stalk which helps the ribosome interact with GTP-bound translation factors. Is thus essential for accurate translation. This Listeria innocua serovar 6a (strain ATCC BAA-680 / CLIP 11262) protein is Large ribosomal subunit protein bL12.